The following is a 465-amino-acid chain: Indoleacetamide hydrolase (465 aa).

The disordered stretch occupies residues 1–40 (MVRGRHRSRDPQRRDLRGRDRRSASRTDARRQSAAERGCR). Residues 9–39 (RDPQRRDLRGRDRRSASRTDARRQSAAERGC) are compositionally biased toward basic and acidic residues. S149 functions as the Charge relay system in the catalytic mechanism. S173 acts as the Acyl-ester intermediate in catalysis.

This sequence belongs to the amidase family.

It participates in plant hormone metabolism; auxin biosynthesis. Functionally, hydrolyzes indole-3-acetamide (IAM) into indole-3-acetic acid (IAA). This chain is Indoleacetamide hydrolase (bam), found in Bradyrhizobium japonicum.